The primary structure comprises 512 residues: Maturase K (512 aa).

This sequence belongs to the intron maturase 2 family. MatK subfamily.

The protein resides in the plastid. It is found in the chloroplast. Usually encoded in the trnK tRNA gene intron. Probably assists in splicing its own and other chloroplast group II introns. The protein is Maturase K of Lemna gibba (Swollen duckweed).